We begin with the raw amino-acid sequence, 113 residues long: uncharacterized protein (113 aa).

Residues 78 to 113 (YCNRGSERTNQGNRGSAPSKILLPRTIADPFRGGPE) form a disordered region.

This is an uncharacterized protein from Halobacterium phage phiH (Bacteriophage phi-H).